The following is a 580-amino-acid chain: Arginine--tRNA ligase (580 aa).

Residues 123 to 133 carry the 'HIGH' region motif; it reads PNIAKEMHVGH.

This sequence belongs to the class-I aminoacyl-tRNA synthetase family. As to quaternary structure, monomer.

It localises to the cytoplasm. It catalyses the reaction tRNA(Arg) + L-arginine + ATP = L-arginyl-tRNA(Arg) + AMP + diphosphate. The polypeptide is Arginine--tRNA ligase (argS) (Buchnera aphidicola subsp. Schizaphis graminum (strain Sg)).